Here is a 311-residue protein sequence, read N- to C-terminus: Aurora kinase (311 aa).

The 281-residue stretch at 20–300 folds into the Protein kinase domain; that stretch reads FEIGRFLGRG…IEDILRHPFL (281 aa). Position 49 (Lys-49) interacts with ATP. Asp-143 (proton acceptor) is an active-site residue. The segment at 189–216 is activation loop; the sequence is DFGWSVHHPTHGGRRRTQCGTLDYLPPE. Residue Thr-205 is modified to Phosphothreonine; by autocatalysis. The short motif at 280 to 299 is the Destruction (D)-box element; the sequence is MLIRSPEARISIEDILRHPF.

It belongs to the protein kinase superfamily. Ser/Thr protein kinase family. Aurora subfamily. As to quaternary structure, interacts with EB1 (via C-terminal residues 101-238). Phosphorylated in mitosis and cytokinesis. Activated by autophosphorylation at Thr-205.

It is found in the nucleus. The protein localises to the cytoplasm. Its subcellular location is the cytoskeleton. It localises to the microtubule organizing center. The protein resides in the centrosome. It is found in the spindle. The protein localises to the spindle pole. Its subcellular location is the nucleus membrane. The catalysed reaction is L-seryl-[protein] + ATP = O-phospho-L-seryl-[protein] + ADP + H(+). The enzyme catalyses L-threonyl-[protein] + ATP = O-phospho-L-threonyl-[protein] + ADP + H(+). Its activity is regulated as follows. Activated by cell-cycle phase specific phosphorylation. Inhibited by ATP-competitive inhibitors N-[4-[[6-Methoxy-7-[3-(4-morpholinyl)propoxy]-4-quinazolinyl]amino]phenyl]benzamide (ZM447439) and cyclopropanecarboxylic acid-(3-(4-(3-trifluoromethylphenylamino)-pyrimidin-2-ylamino)-phenyl)-amide (CFPPA). Inhibition leads to reduced growth, increased cytokinesis, microtubular defects, and increased ploidy of the cells. Involved in regulation of the cell cycle. Required for mitotic cell division and cytokinesis. Based on its localization to centrosomes and spindle microtubules, as well as to various cytoskeletal components such as the median body, parental attachment disk, and anterior and posterior-lateral paraflagellar dense rods, may coordinate reorganization and segregation of tubulin-containing structures during mitosis and cytokinesis. May regulate microtubule disassembly by phosphorylating cytoskeletal proteins leading to their destabilization. Phosphorylates EB1 at 'Ser-148' in vitro. Phosphorylates histone H3 in vitro. This is Aurora kinase from Giardia intestinalis (strain ATCC 50803 / WB clone C6) (Giardia lamblia).